Here is a 425-residue protein sequence, read N- to C-terminus: Histidine--tRNA ligase 1 (425 aa).

The protein belongs to the class-II aminoacyl-tRNA synthetase family. Homodimer.

It is found in the cytoplasm. It carries out the reaction tRNA(His) + L-histidine + ATP = L-histidyl-tRNA(His) + AMP + diphosphate + H(+). In Bacillus anthracis, this protein is Histidine--tRNA ligase 1.